Reading from the N-terminus, the 389-residue chain is MESRADHAVPADEGHGATEPPRGRDRAALREGFTTGTAMTAGAVAALRHVFGLPFLPVLSVPLPPQEGVGVPGRLGVPVAEVLTEGDGATGVVIKDGGDDPDATHGARIETHVRLLPDATATLLLEGGTGVGRVTLPGLPVAVGEVAVNPGPRAQLEFAVREVCAAQGYGGGVRVTVRVPEGEAIARHTLNGRLGIVGGISILGTRGTVRPYSHEAWKAAIAQELSVARALGHRRACLSTGRRSETLLMRRYPDLPEQAFVQAADFVAFALGAAAERGFEALAWGCFFGKLVKLAQGLPHTHARTAPLDLPLLAQWCREAGVDEARVEAVAGANTAGQALDIITPDAACHTALDAVTRRAKAHAERFAGPGVGVTIHLFHLNGTELTSA.

A disordered region spans residues 1–25; the sequence is MESRADHAVPADEGHGATEPPRGRD.

This sequence belongs to the CbiD family.

The enzyme catalyses Co-precorrin-5B + S-adenosyl-L-methionine = Co-precorrin-6A + S-adenosyl-L-homocysteine. Its pathway is cofactor biosynthesis; adenosylcobalamin biosynthesis; cob(II)yrinate a,c-diamide from sirohydrochlorin (anaerobic route): step 6/10. Its function is as follows. Catalyzes the methylation of C-1 in cobalt-precorrin-5B to form cobalt-precorrin-6A. In Nitratidesulfovibrio vulgaris (strain ATCC 29579 / DSM 644 / CCUG 34227 / NCIMB 8303 / VKM B-1760 / Hildenborough) (Desulfovibrio vulgaris), this protein is Cobalt-precorrin-5B C(1)-methyltransferase.